The chain runs to 286 residues: ATP synthase gamma chain (286 aa).

This sequence belongs to the ATPase gamma chain family. F-type ATPases have 2 components, CF(1) - the catalytic core - and CF(0) - the membrane proton channel. CF(1) has five subunits: alpha(3), beta(3), gamma(1), delta(1), epsilon(1). CF(0) has three main subunits: a, b and c.

The protein localises to the cell inner membrane. Its function is as follows. Produces ATP from ADP in the presence of a proton gradient across the membrane. The gamma chain is believed to be important in regulating ATPase activity and the flow of protons through the CF(0) complex. In Pseudomonas savastanoi pv. phaseolicola (strain 1448A / Race 6) (Pseudomonas syringae pv. phaseolicola (strain 1448A / Race 6)), this protein is ATP synthase gamma chain.